We begin with the raw amino-acid sequence, 424 residues long: Arogenate dehydratase 3, chloroplastic (424 aa).

Residues 1 to 24 (MRTLLPSHTPATVTTAARRRHVIH) constitute a chloroplast transit peptide. Positions 57–71 (EQSESLSSNSNGSSS) are enriched in low complexity. A disordered region spans residues 57-77 (EQSESLSSNSNGSSSYHVSAV). Residues 122–299 (RVAYQGVPGA…NVTRFVMLAR (178 aa)) form the Prephenate dehydratase domain. An ACT domain is found at 313-404 (SIVFAHEKGT…SFLRVLGSYP (92 aa)).

May interact with GPA1. In terms of tissue distribution, expressed in roots, leaves, stems, flowers and siliques.

Its subcellular location is the plastid. It localises to the chloroplast stroma. It carries out the reaction L-arogenate + H(+) = L-phenylalanine + CO2 + H2O. It functions in the pathway amino-acid biosynthesis; L-phenylalanine biosynthesis; L-phenylalanine from L-arogenate: step 1/1. In terms of biological role, converts the prephenate produced from the shikimate-chorismate pathway into phenylalanine. Together with GCR1 and GPA1, required for blue light-mediated synthesis of phenylpyruvate and subsequently of phenylalanine (Phe), in etiolated seedlings. The sequence is that of Arogenate dehydratase 3, chloroplastic from Arabidopsis thaliana (Mouse-ear cress).